We begin with the raw amino-acid sequence, 74 residues long: RNA-binding protein Hfq (74 aa).

The region spanning 9 to 69 is the Sm domain; that stretch reads DQFLNQLRKE…ISTFVPQKNV (61 aa).

It belongs to the Hfq family. As to quaternary structure, homohexamer.

RNA chaperone that binds small regulatory RNA (sRNAs) and mRNAs to facilitate mRNA translational regulation in response to envelope stress, environmental stress and changes in metabolite concentrations. Also binds with high specificity to tRNAs. This is RNA-binding protein Hfq from Bacillus cereus (strain Q1).